Here is a 427-residue protein sequence, read N- to C-terminus: Serine--tRNA ligase (427 aa).

231–233 (TAE) lines the L-serine pocket. 262-264 (RSE) serves as a coordination point for ATP. E285 serves as a coordination point for L-serine. 349–352 (EISS) serves as a coordination point for ATP. S385 is a binding site for L-serine.

It belongs to the class-II aminoacyl-tRNA synthetase family. Type-1 seryl-tRNA synthetase subfamily. In terms of assembly, homodimer. The tRNA molecule binds across the dimer.

The protein localises to the cytoplasm. It catalyses the reaction tRNA(Ser) + L-serine + ATP = L-seryl-tRNA(Ser) + AMP + diphosphate + H(+). It carries out the reaction tRNA(Sec) + L-serine + ATP = L-seryl-tRNA(Sec) + AMP + diphosphate + H(+). The protein operates within aminoacyl-tRNA biosynthesis; selenocysteinyl-tRNA(Sec) biosynthesis; L-seryl-tRNA(Sec) from L-serine and tRNA(Sec): step 1/1. Its function is as follows. Catalyzes the attachment of serine to tRNA(Ser). Is also able to aminoacylate tRNA(Sec) with serine, to form the misacylated tRNA L-seryl-tRNA(Sec), which will be further converted into selenocysteinyl-tRNA(Sec). The protein is Serine--tRNA ligase of Exiguobacterium sp. (strain ATCC BAA-1283 / AT1b).